The following is a 211-amino-acid chain: Large ribosomal subunit protein uL4 (211 aa).

Polar residues predominate over residues 41-52 (QTNARQGTASTK). Residues 41 to 78 (QTNARQGTASTKTRAEVRGGGRKPWRQKGTGRARAGSI) are disordered. A compositionally biased stretch (basic residues) spans 60 to 71 (GGRKPWRQKGTG).

The protein belongs to the universal ribosomal protein uL4 family. Part of the 50S ribosomal subunit.

In terms of biological role, one of the primary rRNA binding proteins, this protein initially binds near the 5'-end of the 23S rRNA. It is important during the early stages of 50S assembly. It makes multiple contacts with different domains of the 23S rRNA in the assembled 50S subunit and ribosome. Forms part of the polypeptide exit tunnel. This chain is Large ribosomal subunit protein uL4, found in Rippkaea orientalis (strain PCC 8801 / RF-1) (Cyanothece sp. (strain PCC 8801)).